The primary structure comprises 333 residues: Ketol-acid reductoisomerase (NADP(+)) (333 aa).

The region spanning 1–179 is the KARI N-terminal Rossmann domain; sequence MFYDDDADLS…GGTRAGVIKT (179 aa). Residues 22-25, lysine 45, serine 48, serine 50, and 80-83 each bind NADP(+); these read YGSQ and DTAQ. Histidine 105 is an active-site residue. Glycine 131 provides a ligand contact to NADP(+). One can recognise a KARI C-terminal knotted domain in the interval 180–325; it reads TFKDETETDL…KKLRDLMSWV (146 aa). The Mg(2+) site is built by aspartate 188, glutamate 192, glutamate 224, and glutamate 228. Serine 249 provides a ligand contact to substrate.

The protein belongs to the ketol-acid reductoisomerase family. Mg(2+) serves as cofactor.

It catalyses the reaction (2R)-2,3-dihydroxy-3-methylbutanoate + NADP(+) = (2S)-2-acetolactate + NADPH + H(+). It carries out the reaction (2R,3R)-2,3-dihydroxy-3-methylpentanoate + NADP(+) = (S)-2-ethyl-2-hydroxy-3-oxobutanoate + NADPH + H(+). It functions in the pathway amino-acid biosynthesis; L-isoleucine biosynthesis; L-isoleucine from 2-oxobutanoate: step 2/4. It participates in amino-acid biosynthesis; L-valine biosynthesis; L-valine from pyruvate: step 2/4. Involved in the biosynthesis of branched-chain amino acids (BCAA). Catalyzes an alkyl-migration followed by a ketol-acid reduction of (S)-2-acetolactate (S2AL) to yield (R)-2,3-dihydroxy-isovalerate. In the isomerase reaction, S2AL is rearranged via a Mg-dependent methyl migration to produce 3-hydroxy-3-methyl-2-ketobutyrate (HMKB). In the reductase reaction, this 2-ketoacid undergoes a metal-dependent reduction by NADPH to yield (R)-2,3-dihydroxy-isovalerate. The chain is Ketol-acid reductoisomerase (NADP(+)) from Mycobacterium bovis (strain ATCC BAA-935 / AF2122/97).